The sequence spans 95 residues: Small ribosomal subunit protein uS19 (95 aa).

The protein belongs to the universal ribosomal protein uS19 family.

Its function is as follows. Protein S19 forms a complex with S13 that binds strongly to the 16S ribosomal RNA. The sequence is that of Small ribosomal subunit protein uS19 from Thermodesulfovibrio yellowstonii (strain ATCC 51303 / DSM 11347 / YP87).